The sequence spans 297 residues: Large ribosomal subunit protein uL18 (297 aa).

N-acetylglycine is present on Gly-2. Lys-5 and Lys-48 each carry N6-acetyllysine. Position 185 is a phosphoserine (Ser-185). Position 220 is an N6-acetyllysine; alternate (Lys-220). Lys-220 participates in a covalent cross-link: Glycyl lysine isopeptide (Lys-Gly) (interchain with G-Cter in SUMO1); alternate. Lys-220 is covalently cross-linked (Glycyl lysine isopeptide (Lys-Gly) (interchain with G-Cter in SUMO2); alternate). At Thr-232 the chain carries Phosphothreonine. The interval 253 to 297 (YEKKPKKEVKKKRWNRPKMSLAQKKDRVAQKKASFLRAQERAAES) is disordered. Residues 258–268 (KKEVKKKRWNR) show a composition bias toward basic residues. Ser-272 is modified (phosphoserine).

Belongs to the universal ribosomal protein uL18 family. As to quaternary structure, component of the large ribosomal subunit (LSU). Part of the 5S RNP complex, which is a LSU subcomplex composed of the 5S RNA, RPL5 and RPL11. Component of a hexameric 5S RNP precursor complex, composed of 5S RNA, RRS1, RPF2/BXDC1, RPL5, RPL11 and HEATR3; this complex acts as a precursor for ribosome assembly. Interacts with NVL in an ATP-dependent manner. Interacts with RRP1B. Interacts with IPO5, IPO7 and KPNB1; these interactions may be involved in RPL5 nuclear import for the assembly of ribosomal subunits. Interacts with RRP1B.

The protein resides in the cytoplasm. It is found in the nucleus. Its subcellular location is the nucleolus. Component of the ribosome, a large ribonucleoprotein complex responsible for the synthesis of proteins in the cell. The small ribosomal subunit (SSU) binds messenger RNAs (mRNAs) and translates the encoded message by selecting cognate aminoacyl-transfer RNA (tRNA) molecules. The large subunit (LSU) contains the ribosomal catalytic site termed the peptidyl transferase center (PTC), which catalyzes the formation of peptide bonds, thereby polymerizing the amino acids delivered by tRNAs into a polypeptide chain. The nascent polypeptides leave the ribosome through a tunnel in the LSU and interact with protein factors that function in enzymatic processing, targeting, and the membrane insertion of nascent chains at the exit of the ribosomal tunnel. As part of the 5S RNP/5S ribonucleoprotein particle it is an essential component of the LSU, required for its formation and the maturation of rRNAs. It also couples ribosome biogenesis to p53/TP53 activation. As part of the 5S RNP it accumulates in the nucleoplasm and inhibits MDM2, when ribosome biogenesis is perturbed, mediating the stabilization and the activation of TP53. This chain is Large ribosomal subunit protein uL18 (RPL5), found in Macaca fascicularis (Crab-eating macaque).